Reading from the N-terminus, the 114-residue chain is UPF0342 protein SERP1381 (114 aa).

Belongs to the UPF0342 family.

This is UPF0342 protein SERP1381 from Staphylococcus epidermidis (strain ATCC 35984 / DSM 28319 / BCRC 17069 / CCUG 31568 / BM 3577 / RP62A).